The primary structure comprises 301 residues: Large ribosomal subunit protein uL18y (301 aa).

The interval Arg-247–Asn-267 is disordered. Positions Glu-249–Lys-261 are enriched in basic and acidic residues.

The protein belongs to the universal ribosomal protein uL18 family. Component of the large ribosomal subunit (LSU).

It is found in the cytoplasm. Its subcellular location is the nucleus. The protein localises to the nucleolus. The protein resides in the nucleoplasm. Component of the ribosome, a large ribonucleoprotein complex responsible for the synthesis of proteins in the cell. The small ribosomal subunit (SSU) binds messenger RNAs (mRNAs) and translates the encoded message by selecting cognate aminoacyl-transfer RNA (tRNA) molecules. The large subunit (LSU) contains the ribosomal catalytic site termed the peptidyl transferase center (PTC), which catalyzes the formation of peptide bonds, thereby polymerizing the amino acids delivered by tRNAs into a polypeptide chain. The nascent polypeptides leave the ribosome through a tunnel in the LSU and interact with protein factors that function in enzymatic processing, targeting, and the membrane insertion of nascent chains at the exit of the ribosomal tunnel. Seems involved in the regulation of cell proliferation. Essential in leaf polarity establishment, probably having a role for translation in leaf dorsoventral patterning to specify leaf adaxial identity. In Arabidopsis thaliana (Mouse-ear cress), this protein is Large ribosomal subunit protein uL18y.